A 653-amino-acid chain; its full sequence is 4-hydroxy-2,2'-bipyrrole-5-methanol synthase PigH (653 aa).

Positions 7 to 84 constitute a Carrier domain; that stretch reads ETYETLKQSV…DALDGILQRE (78 aa). Residue serine 45 is modified to O-(pantetheine 4'-phosphoryl)serine. Pyridoxal 5'-phosphate is bound at residue 354-355; the sequence is GY. Histidine 379 is a binding site for substrate. Residues serine 426, histidine 454, and threonine 482 each contribute to the pyridoxal 5'-phosphate site. Lysine 485 is modified (N6-(pyridoxal phosphate)lysine). Residues 512–532 traverse the membrane as a helical segment; that stretch reads VFAATIPAPVAAGVIASIDVM.

It depends on pyridoxal 5'-phosphate as a cofactor.

It localises to the membrane. The protein operates within antibiotic biosynthesis; prodigiosin biosynthesis. In terms of biological role, involved in the biosynthesis of 4-methoxy-2,2'-bipyrrole-5-carbaldehyde (MBC), one of the terminal products involved in the biosynthesis of the red antibiotic prodigiosin (Pig). Carrier of the L-malonyl group (malonyl-S-PigH), which is decarboxylated by PigJ to yield a C2 carbanion acetyl-S-PigH. Then the pyrrolyl group of pyrrolyl-S-cysteinyl PigJ intermediate is captured by the C2 carbanion acetyl-S-PigH to yield the pyrrolyl-beta-ketoacyl-S-PigH. In the last step, PigH catalyzes the decarboxylative condensation between the pyrrolyl-beta-ketoacyl (pyrrolyl-beta-ketoacyl-S-PigH) and L-serine to yield 4-hydroxy-2,2'-bipyrrole-5-methanol (HBM). The chain is 4-hydroxy-2,2'-bipyrrole-5-methanol synthase PigH from Serratia sp. (strain ATCC 39006) (Prodigiosinella confusarubida).